Reading from the N-terminus, the 120-residue chain is uncharacterized protein (120 aa).

Positions 45–78 (QLISESLKIAQKDLMEVRKELRKRKIAIRETERD) form a coiled coil.

This is an uncharacterized protein from Bacillus subtilis (strain 168).